The primary structure comprises 342 residues: uncharacterized protein (342 aa).

Residues 3-173 (IAIRGGHNFL…LIGYLIAKGI (171 aa)) form the MurNAc-LAA domain.

This sequence to C.perfringens CPE1502.

This is an uncharacterized protein from Clostridium perfringens.